The following is a 433-amino-acid chain: LanC-like protein GCL1 (433 aa).

The segment at 1-22 (MSSSVDFVTEQGRCGDDGNGAG) is disordered.

The protein belongs to the LanC-like protein family.

Functionally, may play a role in signaling. May be not involved in abscisic acid (ABA) signaling. This is LanC-like protein GCL1 (GCL1) from Arabidopsis thaliana (Mouse-ear cress).